Here is a 1151-residue protein sequence, read N- to C-terminus: PPi-type phosphoenolpyruvate carboxykinase 1 (1151 aa).

Positions 1083–1129 form a coiled coil; that stretch reads RQKLEVAKLNKDLAYLNKTIAEKPRLAETLNKQIAAVKEELQYVSSE.

This sequence belongs to the PPi-type phosphoenolpyruvate carboxykinase family. In terms of assembly, monomer and trimer; forms heterotrimers with PEPCK2 and PEPCK3.

It localises to the cytoplasm. It is found in the cytosol. The enzyme catalyses oxaloacetate + diphosphate = phosphoenolpyruvate + phosphate + CO2. Inorganic pyrophosphate (PPi)-dependent phosphoenolpyruvate carboxykinase, which regulates the carbon flow of the central metabolism by fixing CO(2) to phosphoenolpyruvate to produce oxaloacetate. Can also produce pyruvate and diphosphate from phosphoenolpyruvate and phosphate. This chain is PPi-type phosphoenolpyruvate carboxykinase 1, found in Entamoeba histolytica (strain ATCC 30459 / HM-1:IMSS / ABRM).